The primary structure comprises 73 residues: Protein SlyX homolog (73 aa).

Belongs to the SlyX family.

This Pasteurella multocida (strain Pm70) protein is Protein SlyX homolog.